Consider the following 729-residue polypeptide: Fatty acid oxidation complex subunit alpha (729 aa).

An enoyl-CoA hydratase/isomerase region spans residues 1-189 (MLYKGDTLYL…KIGLVDGVVK (189 aa)). Asp296 lines the substrate pocket. The segment at 311–729 (ETPKQAAVLG…ARPVGSLKTA (419 aa)) is 3-hydroxyacyl-CoA dehydrogenase. NAD(+) contacts are provided by residues Met324, Asp343, 400 to 402 (VVE), Lys407, and Ser429. His450 serves as the catalytic For 3-hydroxyacyl-CoA dehydrogenase activity. Residue Asn453 coordinates NAD(+). 2 residues coordinate substrate: Asn500 and Tyr660. The interval 708–729 (RHNEPYYPPVEPARPVGSLKTA) is disordered.

This sequence in the N-terminal section; belongs to the enoyl-CoA hydratase/isomerase family. The protein in the C-terminal section; belongs to the 3-hydroxyacyl-CoA dehydrogenase family. In terms of assembly, heterotetramer of two alpha chains (FadB) and two beta chains (FadA).

The enzyme catalyses a (3S)-3-hydroxyacyl-CoA + NAD(+) = a 3-oxoacyl-CoA + NADH + H(+). It carries out the reaction a (3S)-3-hydroxyacyl-CoA = a (2E)-enoyl-CoA + H2O. The catalysed reaction is a 4-saturated-(3S)-3-hydroxyacyl-CoA = a (3E)-enoyl-CoA + H2O. It catalyses the reaction (3S)-3-hydroxybutanoyl-CoA = (3R)-3-hydroxybutanoyl-CoA. The enzyme catalyses a (3Z)-enoyl-CoA = a 4-saturated (2E)-enoyl-CoA. It carries out the reaction a (3E)-enoyl-CoA = a 4-saturated (2E)-enoyl-CoA. The protein operates within lipid metabolism; fatty acid beta-oxidation. Involved in the aerobic and anaerobic degradation of long-chain fatty acids via beta-oxidation cycle. Catalyzes the formation of 3-oxoacyl-CoA from enoyl-CoA via L-3-hydroxyacyl-CoA. It can also use D-3-hydroxyacyl-CoA and cis-3-enoyl-CoA as substrate. The chain is Fatty acid oxidation complex subunit alpha from Salmonella newport (strain SL254).